A 437-amino-acid polypeptide reads, in one-letter code: UDP-N-acetylmuramate--L-alanine ligase (437 aa).

Residue 108 to 114 participates in ATP binding; it reads GAHGKTS.

Belongs to the MurCDEF family.

It is found in the cytoplasm. It carries out the reaction UDP-N-acetyl-alpha-D-muramate + L-alanine + ATP = UDP-N-acetyl-alpha-D-muramoyl-L-alanine + ADP + phosphate + H(+). It participates in cell wall biogenesis; peptidoglycan biosynthesis. Functionally, cell wall formation. This Staphylococcus aureus protein is UDP-N-acetylmuramate--L-alanine ligase.